Here is a 311-residue protein sequence, read N- to C-terminus: Porphobilinogen deaminase (311 aa).

Cys241 carries the S-(dipyrrolylmethanemethyl)cysteine modification.

The protein belongs to the HMBS family. As to quaternary structure, monomer. The cofactor is dipyrromethane.

The enzyme catalyses 4 porphobilinogen + H2O = hydroxymethylbilane + 4 NH4(+). Its pathway is porphyrin-containing compound metabolism; protoporphyrin-IX biosynthesis; coproporphyrinogen-III from 5-aminolevulinate: step 2/4. In terms of biological role, tetrapolymerization of the monopyrrole PBG into the hydroxymethylbilane pre-uroporphyrinogen in several discrete steps. The protein is Porphobilinogen deaminase of Geobacillus sp. (strain WCH70).